We begin with the raw amino-acid sequence, 70 residues long: KHGSINCRLPPERGPCRGNITKYYYHNESRTCRTFSYGGCEGNSNNFRNRHYCMKYCARKRHGWLGTGWI.

The 51-residue stretch at 7 to 57 (CRLPPERGPCRGNITKYYYHNESRTCRTFSYGGCEGNSNNFRNRHYCMKYC) folds into the BPTI/Kunitz inhibitor domain. 3 cysteine pairs are disulfide-bonded: C7–C57, C16–C40, and C32–C53.

This sequence belongs to the venom Kunitz-type family. Scorpion delta-Ktx subfamily. Delta-Ktx 1 sub-subfamily. Expressed by the venom gland.

The protein localises to the secreted. Serine protease inhibitor that inhibits 85% of the activity of trypsin at a molar ratio of 4:1 (Ki=760 nM). This Olivierus martensii (Manchurian scorpion) protein is Kunitz-type serine protease inhibitor BmKTT-3.